The primary structure comprises 374 residues: MNTNRKKMKVHIGGYVLILALTVSVILQQPELVTGQARVPAMFVLGDSLVDAGNNNFLQTVARANFLPYGIDMNYQPTGRFSNGLTFIDLLARLLEIPSPPPFADPTTSGNRILQGVNYASAAAGILDVSGYNYGGRFSLNQQMVNLETTLSQLRTMMSPQNFTDYLARSLVVLVFGSNDYINNYLMPNLYDSSIRFRPPDFANLLLSQYARQLLTLYSLGLRKIFIPGVAPLGCIPNQRARGISPPDRCVDSVNQILGTFNQGLKSLVDQLNQRSPGAIYVYGNTYSAIGDILNNPAAYGFSVVDRACCGIGRNQGQITCLPLQTPCPNRNQYVFWDAFHPTQTANSILARRAFYGPPSDAYPVNVQQMTLLH.

An N-terminal signal peptide occupies residues 1–28 (MNTNRKKMKVHIGGYVLILALTVSVILQ). The active-site Nucleophile is the serine 48. Asparagine 162 is a glycosylation site (N-linked (GlcNAc...) asparagine). Catalysis depends on residues aspartate 338 and histidine 341.

The protein belongs to the 'GDSL' lipolytic enzyme family.

It localises to the secreted. In Arabidopsis thaliana (Mouse-ear cress), this protein is GDSL esterase/lipase At1g71250.